Reading from the N-terminus, the 914-residue chain is WAG22 antigen (914 aa).

The PE domain maps to 1–93; that stretch reads MSFVIAVPET…GGAYAAAEAA (93 aa). Disordered stretches follow at residues 412 to 431 and 895 to 914; these read GGSGGAGGSGGPAGTAAGGA and AGAGGAGGLVLGRDGQHGLT. Over residues 895 to 904 the composition is skewed to gly residues; sequence AGAGGAGGLV.

Belongs to the mycobacterial PE family. PGRS subfamily.

This Mycobacterium bovis (strain ATCC BAA-935 / AF2122/97) protein is WAG22 antigen (wag22).